The chain runs to 507 residues: MQEPLLGAEGPDYDTFPEKPPPSPGDRARVGTLQNKRVFLATFAAVLGNFSFGYALVYTSPVIPALERSLDPDLHLTKSQASWFGSVFTLGAAAGGLSAMILNDLLGRKLSIMFSAVPSAAGYALMAGAHGLWMLLLGRTLTGFAGGLTAACIPVYVSEIAPPGVRGALGATPQLMAVFGSLSLYALGLLLPWRWLAVAGEAPVLIMILLLSFMPNSPRFLLSRGRDEEALRALAWLRGTDVDVHWEFEQIQDNVRRQSSRVSWAEARAPHVCRPITVALLMRLLQQLTGITPILVYLQSIFDSTAVLLPPKDDAAIVGAVRLLSVLIAALTMDLAGRKVLLFVSAAIMFAANLTLGLYIHFGPRPLSPNSTAGLESESWGDLAQPLAAPAGYLTLVPLLATMLFIMGYAVGWGPITWLLMSEVLPLRARGVASGLCVLASWLTAFVLTKSFLPVVSTFGLQVPFFFFAAICLVSLVFTGCCVPETKGRSLEQIESFFRTGRRSFLR.

Residues 1–28 form a disordered region; it reads MQEPLLGAEGPDYDTFPEKPPPSPGDRA. Residues 1-37 lie on the Cytoplasmic side of the membrane; sequence MQEPLLGAEGPDYDTFPEKPPPSPGDRARVGTLQNKR. A Dileucine internalization motif motif is present at residues 5–6; it reads LL. Serine 23 carries the post-translational modification Phosphoserine. A helical membrane pass occupies residues 38–58; sequence VFLATFAAVLGNFSFGYALVY. Topologically, residues 59–81 are extracellular; sequence TSPVIPALERSLDPDLHLTKSQA. Residues 82–102 traverse the membrane as a helical segment; that stretch reads SWFGSVFTLGAAAGGLSAMIL. The Cytoplasmic segment spans residues 103–111; sequence NDLLGRKLS. The chain crosses the membrane as a helical span at residues 112 to 132; it reads IMFSAVPSAAGYALMAGAHGL. Topologically, residues 133–140 are extracellular; that stretch reads WMLLLGRT. A helical membrane pass occupies residues 141–161; the sequence is LTGFAGGLTAACIPVYVSEIA. The Cytoplasmic portion of the chain corresponds to 162–168; that stretch reads PPGVRGA. The helical transmembrane segment at 169-189 threads the bilayer; that stretch reads LGATPQLMAVFGSLSLYALGL. Residue glutamine 174 coordinates a D-hexose. Topologically, residues 190–194 are extracellular; that stretch reads LLPWR. Residues 195 to 215 traverse the membrane as a helical segment; sequence WLAVAGEAPVLIMILLLSFMP. Residues 216 to 289 lie on the Cytoplasmic side of the membrane; sequence NSPRFLLSRG…LLMRLLQQLT (74 aa). Position 286–287 (286–287) interacts with a D-hexose; sequence QQ. A helical membrane pass occupies residues 290-310; sequence GITPILVYLQSIFDSTAVLLP. Topologically, residues 311 to 314 are extracellular; it reads PKDD. A helical membrane pass occupies residues 315–335; it reads AAIVGAVRLLSVLIAALTMDL. Residues 336–339 lie on the Cytoplasmic side of the membrane; it reads AGRK. The chain crosses the membrane as a helical span at residues 340–360; sequence VLLFVSAAIMFAANLTLGLYI. Over 361–395 the chain is Extracellular; that stretch reads HFGPRPLSPNSTAGLESESWGDLAQPLAAPAGYLT. N-linked (GlcNAc...) asparagine glycosylation occurs at asparagine 370. Residues 396–416 traverse the membrane as a helical segment; it reads LVPLLATMLFIMGYAVGWGPI. Residues 417–435 are Cytoplasmic-facing; sequence TWLLMSEVLPLRARGVASG. Tryptophan 418 is an a D-hexose binding site. A helical transmembrane segment spans residues 436-456; sequence LCVLASWLTAFVLTKSFLPVV. The Extracellular segment spans residues 457–462; it reads STFGLQ. A helical transmembrane segment spans residues 463–483; it reads VPFFFFAAICLVSLVFTGCCV. At 484 to 507 the chain is on the cytoplasmic side; sequence PETKGRSLEQIESFFRTGRRSFLR.

Belongs to the major facilitator superfamily. Sugar transporter (TC 2.A.1.1) family. Glucose transporter subfamily. In terms of tissue distribution, highly expressed in brain, spleen and peripheral blood leukocytes.

It localises to the lysosome membrane. Functionally, probable sugar transporter that acts as a regulator of glycolysis in macrophages. Does not transport glucose. The polypeptide is Solute carrier family 2, facilitated glucose transporter member 6 (Homo sapiens (Human)).